Consider the following 216-residue polypeptide: UDP-N-acetylbacillosamine N-acetyltransferase (216 aa).

The active-site Proton acceptor is the H137. Position 146 (H146) interacts with acetyl-CoA.

Belongs to the transferase hexapeptide repeat family. As to quaternary structure, forms oligomers.

The catalysed reaction is UDP-N-acetylbacillosamine + acetyl-CoA = UDP-N,N'-diacetylbacillosamine + CoA + H(+). Functionally, catalyzes the conversion of UDP-2,4,6-trideoxy-2-acetamido-4-amino glucose to UDP-2,4,6-trideoxy-2,4-diacetamido glucose, commonly known as UDP-N,N'-diacetylbacillosamine (UDP-diNAcBac). The sequence is that of UDP-N-acetylbacillosamine N-acetyltransferase from Bacillus subtilis (strain 168).